The chain runs to 257 residues: Pyridoxine 5'-phosphate synthase (257 aa).

Residue asparagine 6 coordinates 3-amino-2-oxopropyl phosphate. Residue 8 to 9 (DH) coordinates 1-deoxy-D-xylulose 5-phosphate. Arginine 17 is a 3-amino-2-oxopropyl phosphate binding site. Histidine 42 acts as the Proton acceptor in catalysis. 1-deoxy-D-xylulose 5-phosphate-binding residues include arginine 44 and histidine 49. Catalysis depends on glutamate 69, which acts as the Proton acceptor. A 1-deoxy-D-xylulose 5-phosphate-binding site is contributed by threonine 99. Residue histidine 211 is the Proton donor of the active site. Residues glycine 212 and 233–234 (GQ) contribute to the 3-amino-2-oxopropyl phosphate site.

This sequence belongs to the PNP synthase family. In terms of assembly, homooctamer; tetramer of dimers.

Its subcellular location is the cytoplasm. The enzyme catalyses 3-amino-2-oxopropyl phosphate + 1-deoxy-D-xylulose 5-phosphate = pyridoxine 5'-phosphate + phosphate + 2 H2O + H(+). The protein operates within cofactor biosynthesis; pyridoxine 5'-phosphate biosynthesis; pyridoxine 5'-phosphate from D-erythrose 4-phosphate: step 5/5. Catalyzes the complicated ring closure reaction between the two acyclic compounds 1-deoxy-D-xylulose-5-phosphate (DXP) and 3-amino-2-oxopropyl phosphate (1-amino-acetone-3-phosphate or AAP) to form pyridoxine 5'-phosphate (PNP) and inorganic phosphate. The chain is Pyridoxine 5'-phosphate synthase from Campylobacter hominis (strain ATCC BAA-381 / DSM 21671 / CCUG 45161 / LMG 19568 / NCTC 13146 / CH001A).